Reading from the N-terminus, the 214-residue chain is Probable nicotinate-nucleotide adenylyltransferase (214 aa).

This sequence belongs to the NadD family.

The enzyme catalyses nicotinate beta-D-ribonucleotide + ATP + H(+) = deamido-NAD(+) + diphosphate. The protein operates within cofactor biosynthesis; NAD(+) biosynthesis; deamido-NAD(+) from nicotinate D-ribonucleotide: step 1/1. Functionally, catalyzes the reversible adenylation of nicotinate mononucleotide (NaMN) to nicotinic acid adenine dinucleotide (NaAD). This Mycolicibacterium vanbaalenii (strain DSM 7251 / JCM 13017 / BCRC 16820 / KCTC 9966 / NRRL B-24157 / PYR-1) (Mycobacterium vanbaalenii) protein is Probable nicotinate-nucleotide adenylyltransferase.